Here is a 150-residue protein sequence, read N- to C-terminus: C-C motif chemokine 25 (150 aa).

The first 23 residues, 1-23 (MNLWLLACLVAGFLGAWAPAVHT), serve as a signal peptide directing secretion. 2 disulfide bridges follow: Cys30–Cys58 and Cys31–Cys75.

This sequence belongs to the intercrine beta (chemokine CC) family. As to expression, specifically expressed by thymic dendritic cells. High levels in thymus and small intestine.

Its subcellular location is the secreted. Its function is as follows. Potentially involved in T-cell development. Recombinant protein shows chemotactic activity on thymocytes, macrophages, THP-1 cells, and dendritics cells but is inactive on peripheral blood lymphocytes and neutrophils. Binds to CCR9. Isoform 2 is an antagonist of isoform 1. Binds to atypical chemokine receptor ACKR4 and mediates the recruitment of beta-arrestin (ARRB1/2) to ACKR4. The polypeptide is C-C motif chemokine 25 (CCL25) (Homo sapiens (Human)).